The sequence spans 794 residues: Ribonucleoside-diphosphate reductase large subunit (794 aa).

Positions 1-92 (MHVIKRDGGQ…VSNLHKETKK (92 aa)) constitute an ATP-cone domain. ATP is bound by residues 5 to 6 (KR), 11 to 17 (EGVMFDK), Thr-53, and Asp-57. Residues Ser-202 and Ser-217 each contribute to the GDP site. Cysteines 218 and 444 form a disulfide. DTTP-binding positions include 226 to 228 (DSI), Lys-243, Arg-256, and 263 to 264 (AG). Asn-427 contributes to the GDP binding site. Asn-427 (proton acceptor) is an active-site residue. The Cysteine radical intermediate role is filled by Cys-429. GDP contacts are provided by residues Glu-431 and 604–607 (TAST). The Proton acceptor role is filled by Glu-431.

The protein belongs to the ribonucleoside diphosphate reductase large chain family. As to quaternary structure, heterodimer of a large and a small subunit.

Its subcellular location is the cytoplasm. It catalyses the reaction a 2'-deoxyribonucleoside 5'-diphosphate + [thioredoxin]-disulfide + H2O = a ribonucleoside 5'-diphosphate + [thioredoxin]-dithiol. Under complex allosteric control mediated by deoxynucleoside triphosphates and ATP binding to separate specificity and activation sites on the M1 subunit. The type of nucleotide bound at the specificity site determines substrate preference. It seems probable that ATP makes the enzyme reduce CDP and UDP, dGTP favors ADP reduction and dTTP favors GDP reduction. Stimulated by ATP and inhibited by dATP binding to the activity site. Its function is as follows. Provides the precursors necessary for DNA synthesis. Catalyzes the biosynthesis of deoxyribonucleotides from the corresponding ribonucleotides. The protein is Ribonucleoside-diphosphate reductase large subunit (rrm1) of Danio rerio (Zebrafish).